Consider the following 455-residue polypeptide: Beta-1,4-mannosyltransferase bre-3 (455 aa).

The protein belongs to the glycosyltransferase 2 family. Endothelial cells.

Its subcellular location is the cytoplasm. The protein operates within protein modification; protein glycosylation. In terms of biological role, glycosyltransferase with a proposed role in glycosphingolipid biosynthesis. Involved in susceptibility to pore-forming crystal toxins in conjunction with bre-1, bre-2, bre-4 and bre-5. Involved in resistance to the nematotoxic C.cinerea galectin Cgl2. Has a role in determining brood size. This is Beta-1,4-mannosyltransferase bre-3 (bre-3) from Caenorhabditis elegans.